The chain runs to 107 residues: Putative nucleosome assembly protein 1-like 6 (107 aa).

The protein belongs to the nucleosome assembly protein (NAP) family.

The polypeptide is Putative nucleosome assembly protein 1-like 6 (Homo sapiens (Human)).